Reading from the N-terminus, the 365-residue chain is Fructose-1,6-bisphosphatase class 1 2 (365 aa).

Mg(2+)-binding residues include E100, D122, L124, and D125. Residues D125–S128 and N221 contribute to the substrate site. A Mg(2+)-binding site is contributed by E293.

This sequence belongs to the FBPase class 1 family. In terms of assembly, homotetramer. Mg(2+) is required as a cofactor.

It localises to the cytoplasm. The catalysed reaction is beta-D-fructose 1,6-bisphosphate + H2O = beta-D-fructose 6-phosphate + phosphate. The protein operates within carbohydrate biosynthesis; gluconeogenesis. The sequence is that of Fructose-1,6-bisphosphatase class 1 2 from Cupriavidus metallidurans (strain ATCC 43123 / DSM 2839 / NBRC 102507 / CH34) (Ralstonia metallidurans).